The following is a 623-amino-acid chain: Glutathione import ATP-binding protein GsiA (623 aa).

2 consecutive ABC transporter domains span residues 15–269 and 325–564; these read VSGL…QTLL and LRSG…RKLM. Residues 49 to 56 and 357 to 364 contribute to the ATP site; these read GESGSGKS.

It belongs to the ABC transporter superfamily. Glutathione importer (TC 3.A.1.5.11) family. In terms of assembly, the complex is composed of two ATP-binding proteins (GsiA), two transmembrane proteins (GsiC and GsiD) and a solute-binding protein (GsiB).

It localises to the cell inner membrane. It carries out the reaction glutathione(out) + ATP + H2O = glutathione(in) + ADP + phosphate + H(+). Its function is as follows. Part of the ABC transporter complex GsiABCD involved in glutathione import. Responsible for energy coupling to the transport system. In Salmonella choleraesuis (strain SC-B67), this protein is Glutathione import ATP-binding protein GsiA.